The sequence spans 644 residues: Threonine--tRNA ligase (644 aa).

Residues 1-61 (MVAITLPDGN…TQDASVEIVT (61 aa)) enclose the TGS domain. The tract at residues 242–533 (DHRKIGKALN…LIEHYAGWMP (292 aa)) is catalytic. Zn(2+)-binding residues include Cys-333, His-384, and His-510.

The protein belongs to the class-II aminoacyl-tRNA synthetase family. Homodimer. Zn(2+) serves as cofactor.

It localises to the cytoplasm. The catalysed reaction is tRNA(Thr) + L-threonine + ATP = L-threonyl-tRNA(Thr) + AMP + diphosphate + H(+). Catalyzes the attachment of threonine to tRNA(Thr) in a two-step reaction: L-threonine is first activated by ATP to form Thr-AMP and then transferred to the acceptor end of tRNA(Thr). Also edits incorrectly charged L-seryl-tRNA(Thr). The sequence is that of Threonine--tRNA ligase from Psychrobacter sp. (strain PRwf-1).